Consider the following 360-residue polypeptide: Photosystem II protein D1 (360 aa).

The next 3 membrane-spanning stretches (helical) occupy residues 30 to 47, 119 to 134, and 143 to 157; these read YVGW…AAAI, HFLI…QWEL, and WICV…AAFA. Chlorophyll a is bound at residue His119. A pheophytin a-binding site is contributed by Trp127. Residues Asp171 and Glu190 each coordinate [CaMn4O5] cluster. The chain crosses the membrane as a helical span at residues 198-219; sequence FHMAGVAGMFGGSLFSAMHGSL. Position 199 (His199) interacts with chlorophyll a. Residues His216 and 265–266 contribute to the a quinone site; that span reads SF. His216 provides a ligand contact to Fe cation. Fe cation is bound at residue His273. The helical transmembrane segment at 275 to 289 threads the bilayer; that stretch reads FLAIFPVVCVWLTSM. [CaMn4O5] cluster is bound by residues His333, Glu334, Asp343, and Ala345. A propeptide spanning residues 346–360 is cleaved from the precursor; it reads AAESTSVALVAPSIG.

The protein belongs to the reaction center PufL/M/PsbA/D family. In terms of assembly, PSII is composed of 1 copy each of membrane proteins PsbA, PsbB, PsbC, PsbD, PsbE, PsbF, PsbH, PsbI, PsbJ, PsbK, PsbL, PsbM, PsbT, PsbX, PsbY, Psb30/Ycf12, peripheral proteins PsbO, CyanoQ (PsbQ), PsbU, PsbV and a large number of cofactors. It forms dimeric complexes. The D1/D2 heterodimer binds P680, chlorophylls that are the primary electron donor of PSII, and subsequent electron acceptors. It shares a non-heme iron and each subunit binds pheophytin, quinone, additional chlorophylls, carotenoids and lipids. D1 provides most of the ligands for the Mn4-Ca-O5 cluster of the oxygen-evolving complex (OEC). There is also a Cl(-1) ion associated with D1 and D2, which is required for oxygen evolution. The PSII complex binds additional chlorophylls, carotenoids and specific lipids. is required as a cofactor. Tyr-162 forms a radical intermediate that is referred to as redox-active TyrZ, YZ or Y-Z. In terms of processing, C-terminally processed by CtpA; processing is essential to allow assembly of the oxygen-evolving complex and thus photosynthetic growth.

It is found in the cellular thylakoid membrane. The catalysed reaction is 2 a plastoquinone + 4 hnu + 2 H2O = 2 a plastoquinol + O2. Its function is as follows. Photosystem II (PSII) is a light-driven water:plastoquinone oxidoreductase that uses light energy to abstract electrons from H(2)O, generating O(2) and a proton gradient subsequently used for ATP formation. It consists of a core antenna complex that captures photons, and an electron transfer chain that converts photonic excitation into a charge separation. The D1/D2 (PsbA/PsbD) reaction center heterodimer binds P680, the primary electron donor of PSII as well as several subsequent electron acceptors. The protein is Photosystem II protein D1 of Prochlorococcus marinus (strain SARG / CCMP1375 / SS120).